A 131-amino-acid chain; its full sequence is Fluoride-specific ion channel FluC 1 (131 aa).

4 helical membrane passes run 4–24 (ILLI…LSGW), 32–52 (FPLG…LVMY), 66–86 (ILLT…SYES), and 95–115 (LMQL…AVYL). Positions 74 and 77 each coordinate Na(+).

Belongs to the fluoride channel Fluc/FEX (TC 1.A.43) family.

The protein localises to the cell membrane. It catalyses the reaction fluoride(in) = fluoride(out). Its activity is regulated as follows. Na(+) is not transported, but it plays an essential structural role and its presence is essential for fluoride channel function. Functionally, fluoride-specific ion channel. Important for reducing fluoride concentration in the cell, thus reducing its toxicity. This Methanosarcina acetivorans (strain ATCC 35395 / DSM 2834 / JCM 12185 / C2A) protein is Fluoride-specific ion channel FluC 1.